A 1199-amino-acid polypeptide reads, in one-letter code: Nucleolar protein 6 (1199 aa).

Residues 1–10 (MLRNKRKAGK) are compositionally biased toward basic residues. 2 disordered regions span residues 1 to 51 (MLRN…EPKP) and 1146 to 1199 (KREQ…KALK). 2 stretches are compositionally biased toward basic and acidic residues: residues 28-37 (HAEDHSDLEH) and 1146-1169 (KREQREHQKPKRYFDAKQTEEKST).

Belongs to the NRAP family. In terms of assembly, part of the small subunit (SSU) processome, composed of more than 70 proteins and the RNA chaperone small nucleolar RNA (snoRNA) U3.

The protein localises to the nucleus. It localises to the nucleolus. The protein resides in the chromosome. In terms of biological role, part of the small subunit (SSU) processome, first precursor of the small eukaryotic ribosomal subunit. During the assembly of the SSU processome in the nucleolus, many ribosome biogenesis factors, an RNA chaperone and ribosomal proteins associate with the nascent pre-rRNA and work in concert to generate RNA folding, modifications, rearrangements and cleavage as well as targeted degradation of pre-ribosomal RNA by the RNA exosome. In Drosophila yakuba (Fruit fly), this protein is Nucleolar protein 6.